The chain runs to 57 residues: MSGGFYNVECPDCENEQTVFGKASTEVACAVCGTTLARPTGGEADLLGEVIETVEAR.

The Zn(2+) site is built by Cys-10, Cys-13, Cys-29, and Cys-32. The C4-type zinc-finger motif lies at 10 to 32 (CPDCENEQTVFGKASTEVACAVC).

Belongs to the eukaryotic ribosomal protein eS27 family. Part of the 30S ribosomal subunit. Zn(2+) serves as cofactor.

In Halobacterium salinarum (strain ATCC 29341 / DSM 671 / R1), this protein is Small ribosomal subunit protein eS27.